Consider the following 127-residue polypeptide: Large ribosomal subunit protein bL12 (127 aa).

It belongs to the bacterial ribosomal protein bL12 family. In terms of assembly, homodimer. Part of the ribosomal stalk of the 50S ribosomal subunit. Forms a multimeric L10(L12)X complex, where L10 forms an elongated spine to which 2 to 4 L12 dimers bind in a sequential fashion. Binds GTP-bound translation factors.

Forms part of the ribosomal stalk which helps the ribosome interact with GTP-bound translation factors. Is thus essential for accurate translation. The chain is Large ribosomal subunit protein bL12 from Caulobacter vibrioides (strain ATCC 19089 / CIP 103742 / CB 15) (Caulobacter crescentus).